The sequence spans 371 residues: Alginate lyase (371 aa).

Residues 1–28 (MRRPMTLFKRISSPALLALALFGGAAHA) form the signal peptide. Substrate contacts are provided by residues 67 to 68 (SK), 140 to 141 (HT), and tyrosine 258.

Belongs to the polysaccharide lyase 5 family.

The protein localises to the periplasm. The enzyme catalyses Eliminative cleavage of alginate to give oligosaccharides with 4-deoxy-alpha-L-erythro-hex-4-enuronosyl groups at their non-reducing ends and beta-D-mannuronate at their reducing end.. Catalyzes the depolymerization of alginate by cleaving the beta-1,4 glycosidic bond between two adjacent sugar residues via a beta-elimination mechanism. May serve to degrade mislocalized alginate that is trapped in the periplasmic space. The chain is Alginate lyase from Pseudomonas putida (strain ATCC 47054 / DSM 6125 / CFBP 8728 / NCIMB 11950 / KT2440).